The primary structure comprises 69 residues: Large ribosomal subunit protein bL32c (69 aa).

The protein belongs to the bacterial ribosomal protein bL32 family.

The protein localises to the plastid. The protein resides in the chloroplast. The protein is Large ribosomal subunit protein bL32c (rpl32) of Marchantia polymorpha (Common liverwort).